The primary structure comprises 378 residues: Envelope glycoprotein M (378 aa).

Residues 1–16 (MKSSKSDLFIYKTWFK) are Intravirion-facing. A helical membrane pass occupies residues 17–37 (LLVLYFVMFVLSATVPIAASF). Topologically, residues 38–84 (PGLGFPCYYNALVNYSAINLTERNVAKHLTPTLYLEEPEMFAYMTFT) are virion surface. A helical transmembrane segment spans residues 85–105 (FLVDCFAAVYYFLGALAIMLA). Over 106–118 (KRHFVVSLTTLSQ) the chain is Intravirion. Residues 119–139 (WIAMVGTPTLILIGMWRMWTI) form a helical membrane-spanning segment. Topologically, residues 140-150 (QLFIQTLSYKH) are virion surface. Residues 151–171 (IYLSAFVYLIHFLLSFLHTQC) traverse the membrane as a helical segment. Topologically, residues 172 to 210 (YISRNSQLWSLKVLEQGIPPNTLLDTVVFTIKPLLANCQ) are intravirion. The chain crosses the membrane as a helical span at residues 211-231 (LFCLGLEMLVFSLSFMMAIGN). Topologically, residues 232–239 (SFYVLVSD) are virion surface. Residues 240–260 (IVFGAINLYLALVLFWVLLTE) traverse the membrane as a helical segment. Residues 261-268 (LYLVKYMT) are Intravirion-facing. Residues 269–289 (FVMGFYLGGLIGCIFLLVPLW) traverse the membrane as a helical segment. Residues 290-303 (RYEQIFVAANLRSP) are Virion surface-facing. The chain crosses the membrane as a helical span at residues 304 to 324 (ILINILVIFFLCTLSALVRLL). The Intravirion segment spans residues 325–378 (RMTWFSPTKPSYEPIQLKNIKHRRVKLQSPSGPSILEEGSSDEGSEDSEEEEEL). Residues 347 to 378 (RRVKLQSPSGPSILEEGSSDEGSEDSEEEEEL) are disordered. Over residues 363-378 (GSSDEGSEDSEEEEEL) the composition is skewed to acidic residues.

Belongs to the herpesviridae glycoprotein M family. In terms of assembly, interacts (via N-terminus) with gN (via N-terminus). The gM-gN heterodimer forms the gCII complex.

It localises to the virion membrane. It is found in the host Golgi apparatus. The protein resides in the host trans-Golgi network. The protein localises to the host endosome membrane. Its subcellular location is the host nucleus inner membrane. In terms of biological role, envelope glycoprotein important for virion assembly and egress. Plays a role in the correct incorporation of gH-gL into virion membrane. Directs the glycoprotein N (gN) to the host trans-Golgi network. The protein is Envelope glycoprotein M of Equus caballus (Horse).